Consider the following 54-residue polypeptide: Large ribosomal subunit protein bL33 (54 aa).

The protein belongs to the bacterial ribosomal protein bL33 family.

In Thermus thermophilus (strain ATCC BAA-163 / DSM 7039 / HB27), this protein is Large ribosomal subunit protein bL33.